Consider the following 414-residue polypeptide: MATQRASGLLQRLAQGSLVKQILVGLVLGILLAWISKPAAEAVGLLGTLFVGALKAVAPVLVLMLVMASIANHQHGQKTNIRPILFLYLLGTFSAALAAVVFSFAFPSTLHLSSSAQDIVPPSGIVEVLRGLLMSMVSNPIDALLNANYIGILVWAVSLGFALRHGNETTKNLVNDMSNAVTFMVKLVIRFAPIGIFGLVSSTLATTGFSTLWGYAHLLVVLIGCMLLVALVVNPLLVFWKIRRNPYPLVFACLRESGVYAFFTRSSAANIPVNMALCEKLNLDRDTYSVSIPLGATINMAGAAITITVLTLAAVHTLGVPVDLPTALLLSVVASLCACGASGVAGGSLLLIPLACNMFGIPNDIAMQVVAVGFIIGVLQDSCETALNSSTDVLFTAAACQAEDERLANNALRS.

Helical transmembrane passes span 16–36, 46–66, 84–104, 143–163, 180–200, 219–239, 300–320, and 332–352; these read GSLV…AWIS, LGTL…LMLV, ILFL…VFSF, ALLN…GFAL, AVTF…FGLV, LVVL…LLVF, MAGA…TLGV, and VVAS…LLLI.

It belongs to the dicarboxylate/amino acid:cation symporter (DAACS) (TC 2.A.23) family.

It localises to the cell inner membrane. The catalysed reaction is L-serine(in) + Na(+)(in) = L-serine(out) + Na(+)(out). It carries out the reaction L-threonine(in) + Na(+)(in) = L-threonine(out) + Na(+)(out). Its function is as follows. Involved in the import of serine and threonine into the cell, with the concomitant import of sodium (symport system). This chain is Serine/threonine transporter SstT, found in Salmonella schwarzengrund (strain CVM19633).